A 364-amino-acid chain; its full sequence is MFNVYEFFNRINEVRPESRLDAGQPDIPVRREIIEEAVESLRRGETGYTSTGGIRELRERIAEFEGVSADEVIVAPGAKILIAAEIASAKKVAVVSPRWNAYSLIARQFWREVEVIKTTLDERWIPRVEEIKADLIIINYPNNPTGRVLSGKEIRGLLDVAEENGVKVLSDEVYAELSFTRFTPARELYENVVTVKGFSKLYSMTGFRLGYAIGERNEIRRIQRFIESTVTCVPPFVQRAGVKALELRDELIKEVRRAYLERVRMASKMLRGFDFVEPEGAFYIFLRTPQDGMAFAERLLSRGVAVFPGMAFGDYPNFIRISLSGKGLERGLRVIREELECALESRATEGWEGSSRGVSAEGSR.

L-aspartate is bound by residues glycine 23, tryptophan 99, and asparagine 143. Lysine 200 carries the post-translational modification N6-(pyridoxal phosphate)lysine. Arginine 320 serves as a coordination point for L-aspartate.

Belongs to the class-I pyridoxal-phosphate-dependent aminotransferase family. Homodimer. Requires pyridoxal 5'-phosphate as cofactor.

It is found in the cytoplasm. It carries out the reaction L-aspartate + 2-oxoglutarate = oxaloacetate + L-glutamate. This is Aspartate aminotransferase (aspC) from Thermococcus kodakarensis (strain ATCC BAA-918 / JCM 12380 / KOD1) (Pyrococcus kodakaraensis (strain KOD1)).